The primary structure comprises 396 residues: Formate-dependent phosphoribosylglycinamide formyltransferase (396 aa).

N(1)-(5-phospho-beta-D-ribosyl)glycinamide is bound by residues Glu24–Leu25 and Glu84. Residues Arg116, Lys157, Ser162–Gln167, Glu197–Val200, and Glu205 each bind ATP. In terms of domain architecture, ATP-grasp spans Arg121–Leu310. The Mg(2+) site is built by Glu269 and Glu281. N(1)-(5-phospho-beta-D-ribosyl)glycinamide is bound by residues Asp288, Lys359, and Arg366–Arg367.

The protein belongs to the PurK/PurT family. Homodimer.

It catalyses the reaction N(1)-(5-phospho-beta-D-ribosyl)glycinamide + formate + ATP = N(2)-formyl-N(1)-(5-phospho-beta-D-ribosyl)glycinamide + ADP + phosphate + H(+). The protein operates within purine metabolism; IMP biosynthesis via de novo pathway; N(2)-formyl-N(1)-(5-phospho-D-ribosyl)glycinamide from N(1)-(5-phospho-D-ribosyl)glycinamide (formate route): step 1/1. In terms of biological role, involved in the de novo purine biosynthesis. Catalyzes the transfer of formate to 5-phospho-ribosyl-glycinamide (GAR), producing 5-phospho-ribosyl-N-formylglycinamide (FGAR). Formate is provided by PurU via hydrolysis of 10-formyl-tetrahydrofolate. This is Formate-dependent phosphoribosylglycinamide formyltransferase from Psychromonas ingrahamii (strain DSM 17664 / CCUG 51855 / 37).